A 118-amino-acid chain; its full sequence is Deoxynogalonate monooxygenase (118 aa).

The ABM domain occupies V14–F100.

As to quaternary structure, homodimer.

The enzyme catalyses deoxynogalonate + O2 = nogalonate + H2O + H(+). It functions in the pathway antibiotic biosynthesis. Its function is as follows. Involved in the biosynthesis of the anthracycline (aromatic polyketide) antibiotic nogalamycin. Catalyzes the oxygenation of 12-deoxy-nogalonic acid at position 12 to yield nogalonic acid. This is Deoxynogalonate monooxygenase from Streptomyces nogalater.